The following is a 352-amino-acid chain: GTPase Obg (352 aa).

The Obg domain maps to 1–159 (MHFLDQAKIY…MWVWLRLKLL (159 aa)). The OBG-type G domain occupies 160-327 (ADVGLLGLPN…LLDAVLGYLP (168 aa)). GTP-binding positions include 166–173 (GLPNAGKS), 191–195 (FTTLV), 212–215 (DIPG), 279–282 (NKLD), and 308–310 (SGA). 2 residues coordinate Mg(2+): S173 and T193. A disordered region spans residues 329–352 (STSTETKGSEVEEVDEEGGEWSPI). Residues 339–352 (VEEVDEEGGEWSPI) show a composition bias toward acidic residues.

This sequence belongs to the TRAFAC class OBG-HflX-like GTPase superfamily. OBG GTPase family. In terms of assembly, monomer. Mg(2+) serves as cofactor.

It localises to the cytoplasm. Functionally, an essential GTPase which binds GTP, GDP and possibly (p)ppGpp with moderate affinity, with high nucleotide exchange rates and a fairly low GTP hydrolysis rate. Plays a role in control of the cell cycle, stress response, ribosome biogenesis and in those bacteria that undergo differentiation, in morphogenesis control. The polypeptide is GTPase Obg (Erythrobacter litoralis (strain HTCC2594)).